A 135-amino-acid polypeptide reads, in one-letter code: CDGSH iron-sulfur domain-containing protein 2B (135 aa).

The Lumenal portion of the chain corresponds to 1–37 (MVLETISKIIKTQLPAYLKKFPLPETIGGFARLTVLD). Residues 38–60 (WLRLLPLLGILALLGYLTIRPFL) traverse the membrane as a helical segment. The Cytoplasmic portion of the chain corresponds to 61–135 (PKKKKQKDSL…GPLILKKKIL (75 aa)). Positions 99, 101, 110, and 114 each coordinate [2Fe-2S] cluster.

Belongs to the CISD protein family. CISD2 subfamily. As to quaternary structure, homodimer. [2Fe-2S] cluster serves as cofactor.

Its subcellular location is the endoplasmic reticulum membrane. It localises to the mitochondrion outer membrane. In terms of biological role, regulator of autophagy that contributes to antagonize becn1-mediated cellular autophagy at the endoplasmic reticulum. Participates in the interaction of bcl2 with becn1 and is required for bcl2-mediated depression of endoplasmic reticulum Ca(2+) stores during autophagy. This is CDGSH iron-sulfur domain-containing protein 2B (cisd2b) from Salmo salar (Atlantic salmon).